The chain runs to 76 residues: uncharacterized protein (76 aa).

This is an uncharacterized protein from Homo sapiens (Human).